Reading from the N-terminus, the 483-residue chain is Putative (R)-citramalate synthase CimA (483 aa).

The 245-residue stretch at 1–245 (MRDGEQTPGV…DTGIKHEQIY (245 aa)) folds into the Pyruvate carboxyltransferase domain.

This sequence belongs to the alpha-IPM synthase/homocitrate synthase family. In terms of assembly, homodimer.

It catalyses the reaction pyruvate + acetyl-CoA + H2O = (3R)-citramalate + CoA + H(+). The protein operates within amino-acid biosynthesis; L-isoleucine biosynthesis; 2-oxobutanoate from pyruvate: step 1/3. In terms of biological role, catalyzes the condensation of pyruvate and acetyl-coenzyme A to form (R)-citramalate. In Methanosarcina acetivorans (strain ATCC 35395 / DSM 2834 / JCM 12185 / C2A), this protein is Putative (R)-citramalate synthase CimA.